Consider the following 290-residue polypeptide: 3-hydroxyacyl-thioester dehydratase Y (290 aa).

Residues 147-169 are disordered; that stretch reads FGGARGERPAAPEFPDRHPDARI. The span at 151–169 shows a compositional bias: basic and acidic residues; that stretch reads RGERPAAPEFPDRHPDARI. In terms of domain architecture, MaoC-like spans 161-271; the sequence is PDRHPDARID…AVFRTEVAGS (111 aa).

This sequence belongs to the enoyl-CoA hydratase/isomerase family.

The enzyme catalyses a (3R)-3-hydroxyacyl-CoA = a (2E)-enoyl-CoA + H2O. The catalysed reaction is (3R)-hydroxyhexanoyl-CoA = (2E)-hexenoyl-CoA + H2O. It catalyses the reaction (2E)-octenoyl-CoA + H2O = (3R)-hydroxyoctanoyl-CoA. It carries out the reaction (3R)-3-hydroxydecanoyl-CoA = (2E)-decenoyl-CoA + H2O. The enzyme catalyses (3R)-3-hydroxydodecanoyl-CoA = (2E)-dodecenoyl-CoA + H2O. The catalysed reaction is (3R)-hydroxyhexadecanoyl-CoA = (2E)-hexadecenoyl-CoA + H2O. Its function is as follows. Shows trans-enoyl-CoA hydratase/3-hydroxyacyl-CoA dehydratase activity. In vitro, can hydrate various enoyl-CoA such as (2E)-hexenoyl-CoA, (2E)-octenoyl-CoA, (2E)-decenoyl-CoA, (2E)-dodecenoyl-CoA and (2E)-hexadecenoyl-CoA. May contribute to the persistence of the tuberculosis infection by inducing COX-2 expression in macrophages through MAPK-NF-kappaB signaling pathway. The polypeptide is 3-hydroxyacyl-thioester dehydratase Y (Mycobacterium tuberculosis (strain ATCC 25618 / H37Rv)).